We begin with the raw amino-acid sequence, 666 residues long: Protein OS-9 (666 aa).

Positions 1 to 30 are cleaved as a signal peptide; sequence MAAEALLSSLLGLLFLGLLLPAHLTGGVGS. In terms of domain architecture, MRH spans 108-230; sequence APCLLKTKDW…SIRTSRLCPH (123 aa). C110 and C123 are oxidised to a cystine. The a mannooligosaccharide derivative site is built by W117, W118, and Q130. N177 carries N-linked (GlcNAc...) asparagine glycosylation. Intrachain disulfides connect C181/C216 and C196/C228. A mannooligosaccharide derivative is bound by residues D182, R188, E212, and Y218. Disordered regions lie at residues 261–356, 370–449, 505–540, and 631–666; these read RQAE…NVQV, EELK…SDRE, ESQS…EHRV, and EANK…EFDF. Basic and acidic residues-rich tracts occupy residues 263–281 and 294–310; these read AESK…DTDH and PKKE…ESEF. Low complexity predominate over residues 320 to 332; that stretch reads QATGTEEAQAGEQ. Composition is skewed to basic and acidic residues over residues 370 to 379 and 395 to 412; these read EELKGAEKGK and PQRE…RGLV. Positions 413 to 429 are enriched in acidic residues; that stretch reads EEEDGDEEEEDEDEDEQ. The span at 434 to 449 shows a compositional bias: basic and acidic residues; sequence EFEKELEGMLLPSDRE. Basic and acidic residues predominate over residues 631 to 646; that stretch reads EANKERQRQSELESNY. Acidic residues predominate over residues 657-666; that stretch reads DTGDLDEFDF.

It belongs to the OS-9 family. Component of the HRD1 complex, which comprises at least SYNV1/HRD1, DERL1/2, FAM8A1, HERPUD1/HERP, OS9, SEL1L and UBE2J1. FAM8A1 is stabilized by interaction with SYNV1, which prevents its proteasomal degradation. OS9 and UBE2J1 recruitment to the complex may be mediated by SEL1L. Through this complex, may interact with ERLEC1 and HSPA5. Interacts (via C-terminus) with CPNE6 (via second C2 domain); this interaction occurs in a calcium-dependent manner in vitro. Interacts with CREB3. Intramolecular disulfide bonds.

Its subcellular location is the endoplasmic reticulum lumen. In terms of biological role, lectin component of the HRD1 complex, which functions in endoplasmic reticulum (ER) quality control and ER-associated degradation (ERAD). Specifically recognizes and binds improperly folded glycoproteins as well as hyperglycosylated proteins, retain them in the ER, and transfers them to the ubiquitination machinery and promote their degradation. Possible targets include TRPV4 as well as hyperglycosylated HSP90B1. This is Protein OS-9 (Os9) from Rattus norvegicus (Rat).